The primary structure comprises 332 residues: Biotin synthase (332 aa).

A Radical SAM core domain is found at 53–283 (WGKGGIHACS…VHPHSIIKFA (231 aa)). Cysteine 71, cysteine 75, and cysteine 78 together coordinate [4Fe-4S] cluster. Residues cysteine 150, cysteine 211, and lysine 281 each contribute to the [2Fe-2S] cluster site.

This sequence belongs to the radical SAM superfamily. Biotin synthase family. Homodimer. The cofactor is [4Fe-4S] cluster. Requires [2Fe-2S] cluster as cofactor.

It catalyses the reaction (4R,5S)-dethiobiotin + (sulfur carrier)-SH + 2 reduced [2Fe-2S]-[ferredoxin] + 2 S-adenosyl-L-methionine = (sulfur carrier)-H + biotin + 2 5'-deoxyadenosine + 2 L-methionine + 2 oxidized [2Fe-2S]-[ferredoxin]. It functions in the pathway cofactor biosynthesis; biotin biosynthesis; biotin from 7,8-diaminononanoate: step 2/2. Its function is as follows. Catalyzes the conversion of dethiobiotin (DTB) to biotin by the insertion of a sulfur atom into dethiobiotin via a radical-based mechanism. In Chlorobium phaeovibrioides (strain DSM 265 / 1930) (Prosthecochloris vibrioformis (strain DSM 265)), this protein is Biotin synthase.